We begin with the raw amino-acid sequence, 309 residues long: UPF0252 protein PH0672 (309 aa).

Helical transmembrane passes span S5–I25 and A106–F126.

Belongs to the UPF0252 family.

The protein resides in the cell membrane. The protein is UPF0252 protein PH0672 of Pyrococcus horikoshii (strain ATCC 700860 / DSM 12428 / JCM 9974 / NBRC 100139 / OT-3).